Consider the following 356-residue polypeptide: 3-isopropylmalate dehydrogenase (356 aa).

Substrate is bound by residues R91, R101, R129, and D223. Mg(2+) is bound by residues D223, D247, and D251. NAD(+) is bound at residue G281 to N293.

Belongs to the isocitrate and isopropylmalate dehydrogenases family. LeuB type 1 subfamily. In terms of assembly, homodimer. Requires Mg(2+) as cofactor. It depends on Mn(2+) as a cofactor.

The protein localises to the cytoplasm. It catalyses the reaction (2R,3S)-3-isopropylmalate + NAD(+) = 4-methyl-2-oxopentanoate + CO2 + NADH. It functions in the pathway amino-acid biosynthesis; L-leucine biosynthesis; L-leucine from 3-methyl-2-oxobutanoate: step 3/4. Catalyzes the oxidation of 3-carboxy-2-hydroxy-4-methylpentanoate (3-isopropylmalate) to 3-carboxy-4-methyl-2-oxopentanoate. The product decarboxylates to 4-methyl-2 oxopentanoate. The sequence is that of 3-isopropylmalate dehydrogenase from Ralstonia nicotianae (strain ATCC BAA-1114 / GMI1000) (Ralstonia solanacearum).